A 486-amino-acid polypeptide reads, in one-letter code: RAC-beta serine/threonine-protein kinase A (486 aa).

The region spanning 5-110 is the PH domain; sequence MVIKEGWLQK…WIIAIQTVAN (106 aa). O-linked (GlcNAc) serine glycosylation is found at serine 133 and serine 136. A Protein kinase domain is found at 157–414; sequence FDYLKLLGKG…AQEVMSHRFF (258 aa). ATP-binding positions include 163–171 and lysine 186; that span reads LGKGTFGKV. The Proton acceptor role is filled by aspartate 280. O-linked (GlcNAc) threonine glycosylation is present at threonine 311. Threonine 314 carries the post-translational modification Phosphothreonine. Threonine 318 carries O-linked (GlcNAc) threonine glycosylation. The AGC-kinase C-terminal domain occupies 415–486; it reads VSINWQDVTE…QFSYSASIRE (72 aa). The segment at 455 to 486 is disordered; that stretch reads LTPPDRYDNLDALESDQRPHFPQFSYSASIRE. Positions 459-473 are enriched in basic and acidic residues; sequence DRYDNLDALESDQRP. Serine 479 carries the post-translational modification Phosphoserine. Serine 479 is a glycosylation site (O-linked (GlcNAc) serine; alternate).

It belongs to the protein kinase superfamily. AGC Ser/Thr protein kinase family. RAC subfamily. Phosphorylation on Thr-314 and Ser-479 is required for full activity. Phosphorylation of the activation loop at Thr-314 by PDPK1/PDK1 is a prerequisite for full activation. Phosphorylation by mTORC2 at Ser-479 in response to growth factors plays a key role in AKT1 activation by facilitating subsequent phosphorylation of the activation loop by PDPK1/PDK1.

It catalyses the reaction L-seryl-[protein] + ATP = O-phospho-L-seryl-[protein] + ADP + H(+). The catalysed reaction is L-threonyl-[protein] + ATP = O-phospho-L-threonyl-[protein] + ADP + H(+). Two specific sites, one in the kinase domain (Thr-314) and the other in the C-terminal regulatory region (Ser-479), need to be phosphorylated for its full activation. Functionally, akt2-a is one of several closely related serine/threonine-protein kinases known as the AKT kinase, and which regulate many processes including metabolism, proliferation, cell survival, growth and angiogenesis. This is mediated through serine and/or threonine phosphorylation of a range of downstream substrates. Over 100 substrate candidates have been reported so far, but for most of them, no isoform specificity has been reported. May be involved in the inhibition of ciliogenesis. The chain is RAC-beta serine/threonine-protein kinase A (akt2-a) from Xenopus laevis (African clawed frog).